The following is a 55-amino-acid chain: Photosystem II reaction center protein K (55 aa).

Positions 1 to 18 (MFNIYLENAFYLNGITFA) are excised as a propeptide. The chain crosses the membrane as a helical span at residues 26 to 46 (IFDPIVDVMPIIPLFFFLLAF).

It belongs to the PsbK family. In terms of assembly, PSII is composed of 1 copy each of membrane proteins PsbA, PsbB, PsbC, PsbD, PsbE, PsbF, PsbH, PsbI, PsbJ, PsbK, PsbL, PsbM, PsbT, PsbX, PsbY, PsbZ, Psb30/Ycf12, at least 3 peripheral proteins of the oxygen-evolving complex and a large number of cofactors. It forms dimeric complexes.

It is found in the plastid. Its subcellular location is the chloroplast thylakoid membrane. In terms of biological role, one of the components of the core complex of photosystem II (PSII). PSII is a light-driven water:plastoquinone oxidoreductase that uses light energy to abstract electrons from H(2)O, generating O(2) and a proton gradient subsequently used for ATP formation. It consists of a core antenna complex that captures photons, and an electron transfer chain that converts photonic excitation into a charge separation. The protein is Photosystem II reaction center protein K of Marchantia polymorpha (Common liverwort).